A 308-amino-acid chain; its full sequence is Probable manganese-dependent inorganic pyrophosphatase (308 aa).

Mn(2+) contacts are provided by His-9, Asp-13, Asp-15, Asp-75, His-97, and Asp-149.

This sequence belongs to the PPase class C family. Mn(2+) serves as cofactor.

Its subcellular location is the cytoplasm. The catalysed reaction is diphosphate + H2O = 2 phosphate + H(+). This Enterococcus faecalis (strain ATCC 700802 / V583) protein is Probable manganese-dependent inorganic pyrophosphatase.